Consider the following 366-residue polypeptide: NAD(P)H-quinone oxidoreductase subunit 1, chloroplastic (366 aa).

The next 8 membrane-spanning stretches (helical) occupy residues 29–49 (WITASILILVSGVVIGVLVIV), 97–117 (LLFSIGPAIVVIPVLLSYLVI), 130–150 (IGVFFWIAVSSIAPLGLFMAG), 166–186 (VAQAISYEIPLALCVLSISLL), 202–222 (FGFWGWNVWRQPIGFIAFLIA), 254–274 (FGLFYVASYLNLLVSSLFVTV), 307–327 (VIIGIIITLAKAYSFLFISIV), and 340–360 (LLNLGWKFLLPIALGNLLLTA).

It belongs to the complex I subunit 1 family. NDH is composed of at least 16 different subunits, 5 of which are encoded in the nucleus.

It is found in the plastid. The protein localises to the chloroplast thylakoid membrane. It carries out the reaction a plastoquinone + NADH + (n+1) H(+)(in) = a plastoquinol + NAD(+) + n H(+)(out). The enzyme catalyses a plastoquinone + NADPH + (n+1) H(+)(in) = a plastoquinol + NADP(+) + n H(+)(out). NDH shuttles electrons from NAD(P)H:plastoquinone, via FMN and iron-sulfur (Fe-S) centers, to quinones in the photosynthetic chain and possibly in a chloroplast respiratory chain. The immediate electron acceptor for the enzyme in this species is believed to be plastoquinone. Couples the redox reaction to proton translocation, and thus conserves the redox energy in a proton gradient. The polypeptide is NAD(P)H-quinone oxidoreductase subunit 1, chloroplastic (Anthoceros angustus (Hornwort)).